Consider the following 390-residue polypeptide: GLH-binding kinase 1 (390 aa).

The region spanning 38–338 (YVNLSFLNAG…VEDALNHPYV (301 aa)) is the Protein kinase domain. ATP-binding positions include 44 to 52 (LNAGAQGTV) and Lys67. Asp164 (proton acceptor) is an active-site residue. Ser198 is modified (phosphoserine). A Phosphotyrosine modification is found at Tyr200.

The protein belongs to the protein kinase superfamily. CMGC Ser/Thr protein kinase family. MAP kinase subfamily. As to quaternary structure, interacts with glh-1, glh-2 (via C-terminus), glh-3 (via C-terminus) and glh-4 (via C-terminus). Interacts with csn-5; the interaction may prevent glh-1 degradation induced by kgb-1. Interacts with fos-1. Mg(2+) serves as cofactor. In terms of processing, may be phosphorylated by mek-1 on Ser-198 and/or Tyr-200. Phosphorylation is induced upon Cu(2+) and arsenite-mediated cell stimulation and by fasting. In terms of tissue distribution, expressed in somatic and germline tissues.

It localises to the cytoplasm. The catalysed reaction is L-seryl-[protein] + ATP = O-phospho-L-seryl-[protein] + ADP + H(+). It catalyses the reaction L-threonyl-[protein] + ATP = O-phospho-L-threonyl-[protein] + ADP + H(+). Its activity is regulated as follows. Activated by mek-1 mediated phosphorylation. No differences in basal activation between larvae and adults. Inhibited by phosphatase vhp-1. Functionally, mitogen-activated protein kinase which is an essential component of the JNK pathway composed of mlk-1, mek-1 and kgb-1. Phosphorylates the transcription factor fos-1 which prevents fos-1 dimerization and promoter binding and results in activation of target genes including F53A9.2/kreg-1 and lys-3/kreg-2. Phosphorylates jun-1 and activates the AP-1 transcription factor which is a heterodimer of jun-1 and fos-1. Phosphorylates glh-1 in vitro which may play a role in controlling glh-1 protein levels in the germline by targeting it for degradation by the proteasome. Required for oogenesis and probably also for spermatogenesis. Involved in the response to environmental stress such as heavy metals, infection and protein folding stress in an age-dependent manner. In larvae, has a protective role which becomes detrimental in adults. May control susceptibility to infection, heavy metal stress and premature lethality by regulating daf-16 cellular localization. Involved in the transcriptional response to bacterial pore-forming toxins and to fasting. Required for fasting-induced longevity. Involved in axon regeneration after injury downstream of tyrosine receptor svh-2. This is GLH-binding kinase 1 from Caenorhabditis elegans.